The primary structure comprises 406 residues: Argininosuccinate synthase (406 aa).

ATP is bound by residues 12–20 (AYSGGLDTS) and alanine 39. Residues tyrosine 90 and serine 95 each coordinate L-citrulline. Position 120 (glycine 120) interacts with ATP. Residues threonine 122, asparagine 126, and aspartate 127 each coordinate L-aspartate. An L-citrulline-binding site is contributed by asparagine 126. L-citrulline-binding residues include arginine 130, serine 179, serine 188, glutamate 264, and tyrosine 276.

The protein belongs to the argininosuccinate synthase family. Type 1 subfamily. As to quaternary structure, homotetramer.

The protein resides in the cytoplasm. It carries out the reaction L-citrulline + L-aspartate + ATP = 2-(N(omega)-L-arginino)succinate + AMP + diphosphate + H(+). Its pathway is amino-acid biosynthesis; L-arginine biosynthesis; L-arginine from L-ornithine and carbamoyl phosphate: step 2/3. The sequence is that of Argininosuccinate synthase from Geobacter sp. (strain M21).